The chain runs to 87 residues: MFVVIFGRPGCPYCVRAKEHAETLKAKRDDFNYRYVDIHAEGITKADLEKTIGKPVETVPQIFIDEQHIGGCTDFEAYAKENLGLFD.

Residues 1–87 enclose the Glutaredoxin domain; sequence MFVVIFGRPG…YAKENLGLFD (87 aa). The cysteines at positions 11 and 14 are disulfide-linked.

Belongs to the glutaredoxin family. As to quaternary structure, monomer.

The protein resides in the cytoplasm. Has a glutathione-disulfide oxidoreductase activity in the presence of NADPH and glutathione reductase. Reduces low molecular weight disulfides and proteins. This is Glutaredoxin (grx) from Vibrio cholerae serotype O1 (strain ATCC 39315 / El Tor Inaba N16961).